The primary structure comprises 102 residues: Aspartyl/glutamyl-tRNA(Asn/Gln) amidotransferase subunit C (102 aa).

This sequence belongs to the GatC family. As to quaternary structure, heterotrimer of A, B and C subunits.

The catalysed reaction is L-glutamyl-tRNA(Gln) + L-glutamine + ATP + H2O = L-glutaminyl-tRNA(Gln) + L-glutamate + ADP + phosphate + H(+). It carries out the reaction L-aspartyl-tRNA(Asn) + L-glutamine + ATP + H2O = L-asparaginyl-tRNA(Asn) + L-glutamate + ADP + phosphate + 2 H(+). Allows the formation of correctly charged Asn-tRNA(Asn) or Gln-tRNA(Gln) through the transamidation of misacylated Asp-tRNA(Asn) or Glu-tRNA(Gln) in organisms which lack either or both of asparaginyl-tRNA or glutaminyl-tRNA synthetases. The reaction takes place in the presence of glutamine and ATP through an activated phospho-Asp-tRNA(Asn) or phospho-Glu-tRNA(Gln). The protein is Aspartyl/glutamyl-tRNA(Asn/Gln) amidotransferase subunit C of Bordetella petrii (strain ATCC BAA-461 / DSM 12804 / CCUG 43448).